Consider the following 195-residue polypeptide: Imidazoleglycerol-phosphate dehydratase (195 aa).

This sequence belongs to the imidazoleglycerol-phosphate dehydratase family.

It is found in the cytoplasm. The catalysed reaction is D-erythro-1-(imidazol-4-yl)glycerol 3-phosphate = 3-(imidazol-4-yl)-2-oxopropyl phosphate + H2O. It functions in the pathway amino-acid biosynthesis; L-histidine biosynthesis; L-histidine from 5-phospho-alpha-D-ribose 1-diphosphate: step 6/9. This is Imidazoleglycerol-phosphate dehydratase from Campylobacter curvus (strain 525.92).